The following is a 627-amino-acid chain: Zinc finger MYM-type protein 5 (627 aa).

The disordered stretch occupies residues 1-23 (MEAHLADMESSGGPTSSLAGTSR). The span at 12-23 (GGPTSSLAGTSR) shows a compositional bias: polar residues. Lys59 is covalently cross-linked (Glycyl lysine isopeptide (Lys-Gly) (interchain with G-Cter in SUMO2)). Positions 91-123 (DDEGDTDTNGGEEKNPTDFIEWGPNGNKSSTKN) are disordered. Residues Lys137 and Lys195 each participate in a glycyl lysine isopeptide (Lys-Gly) (interchain with G-Cter in SUMO2) cross-link. The MYM-type 1 zinc finger occupies 234–268 (HLFCSTTCLSSFSHKRTRKTRNVMCKKDSPVRTTT). An MYM-type 2; degenerate zinc finger spans residues 280–319 (QGFYNASLSPYENCQSLRKEVFTKSRCIICNKLGEVRHEI). MYM-type zinc fingers lie at residues 326–354 (HKLC…CSKY) and 370–396 (KRFC…LLQN). The segment at 405–429 (ENEKRLRESSGTLSGNTGDIPEKKE) is disordered. Glycyl lysine isopeptide (Lys-Gly) (interchain with G-Cter in SUMO2) cross-links involve residues Lys408, Lys427, and Lys517.

As to quaternary structure, interacts (via N-terminal 120 amino acid region) with ETV5 (via C-terminal).

The protein resides in the nucleus. Functions as a transcriptional regulator. The protein is Zinc finger MYM-type protein 5 (Zmym5) of Mus musculus (Mouse).